A 743-amino-acid chain; its full sequence is 1,4-alpha-glucan branching enzyme GlgB (743 aa).

D416 serves as the catalytic Nucleophile. E469 serves as the catalytic Proton donor.

This sequence belongs to the glycosyl hydrolase 13 family. GlgB subfamily. As to quaternary structure, monomer.

The enzyme catalyses Transfers a segment of a (1-&gt;4)-alpha-D-glucan chain to a primary hydroxy group in a similar glucan chain.. Its pathway is glycan biosynthesis; glycogen biosynthesis. Catalyzes the formation of the alpha-1,6-glucosidic linkages in glycogen by scission of a 1,4-alpha-linked oligosaccharide from growing alpha-1,4-glucan chains and the subsequent attachment of the oligosaccharide to the alpha-1,6 position. The sequence is that of 1,4-alpha-glucan branching enzyme GlgB from Shewanella baltica (strain OS195).